The following is a 388-amino-acid chain: tRNA(Ile)-lysidine synthase (388 aa).

Position 51-56 (51-56 (SGGRDS)) interacts with ATP.

It belongs to the tRNA(Ile)-lysidine synthase family.

Its subcellular location is the cytoplasm. The catalysed reaction is cytidine(34) in tRNA(Ile2) + L-lysine + ATP = lysidine(34) in tRNA(Ile2) + AMP + diphosphate + H(+). Its function is as follows. Ligates lysine onto the cytidine present at position 34 of the AUA codon-specific tRNA(Ile) that contains the anticodon CAU, in an ATP-dependent manner. Cytidine is converted to lysidine, thus changing the amino acid specificity of the tRNA from methionine to isoleucine. This Bifidobacterium longum (strain NCC 2705) protein is tRNA(Ile)-lysidine synthase.